The primary structure comprises 282 residues: Parvulin-like PPIase (282 aa).

Positions 1-20 are cleaved as a signal peptide; sequence MKKLSVIFLSVSMLSGIAFA. Positions 138 to 231 constitute a PpiC domain; that stretch reads KEQIKVAHIL…FGWHIIKVLE (94 aa).

Belongs to the PpiC/parvulin rotamase family.

Its subcellular location is the cell outer membrane. The enzyme catalyses [protein]-peptidylproline (omega=180) = [protein]-peptidylproline (omega=0). This is Parvulin-like PPIase (plp) from Rickettsia conorii (strain ATCC VR-613 / Malish 7).